We begin with the raw amino-acid sequence, 240 residues long: Methylthioribulose-1-phosphate dehydratase (240 aa).

A compositionally biased stretch (basic and acidic residues) spans 1-10 (MAQEIEKTNN). The segment at 1–20 (MAQEIEKTNNDHLVQSSDPE) is disordered. C100 serves as a coordination point for substrate. 2 residues coordinate Zn(2+): H117 and H119. E146 functions as the Proton donor/acceptor in the catalytic mechanism. H202 is a Zn(2+) binding site.

Belongs to the aldolase class II family. MtnB subfamily. It depends on Zn(2+) as a cofactor.

The protein localises to the cytoplasm. The catalysed reaction is 5-(methylsulfanyl)-D-ribulose 1-phosphate = 5-methylsulfanyl-2,3-dioxopentyl phosphate + H2O. It functions in the pathway amino-acid biosynthesis; L-methionine biosynthesis via salvage pathway; L-methionine from S-methyl-5-thio-alpha-D-ribose 1-phosphate: step 2/6. Functionally, catalyzes the dehydration of methylthioribulose-1-phosphate (MTRu-1-P) into 2,3-diketo-5-methylthiopentyl-1-phosphate (DK-MTP-1-P). This is Methylthioribulose-1-phosphate dehydratase from Aspergillus fumigatus (strain CBS 144.89 / FGSC A1163 / CEA10) (Neosartorya fumigata).